Reading from the N-terminus, the 181-residue chain is MYFKMITSAPWVLYPEIGEDPSKKWIFREPKISDGDGIYSLIADCPPLDMNSSYCNFLQSTHFSKTSILVEHKGDIAGFISGYQKPDEQDVLFIWQVAVSPRFRGNGLAFRMLKELLEREALSEVKSVETTITEDNQASWALFKKLDAMNGNHGQVSTFLDEKAHFKGKHDTEFLYRIPLK.

Residues 25-181 (WIFREPKISD…TEFLYRIPLK (157 aa)) enclose the N-acetyltransferase domain.

This sequence belongs to the acetyltransferase family. EctA subfamily.

The enzyme catalyses L-2,4-diaminobutanoate + acetyl-CoA = (2S)-4-acetamido-2-aminobutanoate + CoA + H(+). The protein operates within amine and polyamine biosynthesis; ectoine biosynthesis; L-ectoine from L-aspartate 4-semialdehyde: step 2/3. Its function is as follows. Catalyzes the acetylation of L-2,4-diaminobutyrate (DABA) to gamma-N-acetyl-alpha,gamma-diaminobutyric acid (ADABA) with acetyl coenzyme A. This Vibrio parahaemolyticus serotype O3:K6 (strain RIMD 2210633) protein is L-2,4-diaminobutyric acid acetyltransferase (ectA).